The following is a 114-amino-acid chain: Large ribosomal subunit protein P2 (114 aa).

Over residues Ala74 to Asp83 the composition is skewed to gly residues. Residues Ala74–Asn114 are disordered. Over residues Ser98–Asn114 the composition is skewed to acidic residues.

Belongs to the eukaryotic ribosomal protein P1/P2 family. In terms of assembly, P1 and P2 exist as dimers at the large ribosomal subunit. Phosphorylated.

Its function is as follows. Plays an important role in the elongation step of protein synthesis. The sequence is that of Large ribosomal subunit protein P2 from Parthenium argentatum (Guayule rubber plant).